The sequence spans 227 residues: Cytochrome c oxidase subunit 2 (227 aa).

The Mitochondrial intermembrane portion of the chain corresponds to 1–14; it reads MAYPFELGFQDATS. Residues 15 to 45 form a helical membrane-spanning segment; sequence PIMEELLHFHDHTLMIVFLISSLVLYIISLM. At 46–59 the chain is on the mitochondrial matrix side; sequence LTTKLTHTSTMDAQ. The chain crosses the membrane as a helical span at residues 60–87; it reads EIETIWTILPAIILILIALPSLRILYMM. Over 88 to 227 the chain is Mitochondrial intermembrane; the sequence is DEINDPSLTV…HFENWSSSML (140 aa). Positions 161, 196, 198, 200, 204, and 207 each coordinate Cu cation. E198 is a binding site for Mg(2+).

The protein belongs to the cytochrome c oxidase subunit 2 family. In terms of assembly, component of the cytochrome c oxidase (complex IV, CIV), a multisubunit enzyme composed of 14 subunits. The complex is composed of a catalytic core of 3 subunits MT-CO1, MT-CO2 and MT-CO3, encoded in the mitochondrial DNA, and 11 supernumerary subunits COX4I, COX5A, COX5B, COX6A, COX6B, COX6C, COX7A, COX7B, COX7C, COX8 and NDUFA4, which are encoded in the nuclear genome. The complex exists as a monomer or a dimer and forms supercomplexes (SCs) in the inner mitochondrial membrane with NADH-ubiquinone oxidoreductase (complex I, CI) and ubiquinol-cytochrome c oxidoreductase (cytochrome b-c1 complex, complex III, CIII), resulting in different assemblies (supercomplex SCI(1)III(2)IV(1) and megacomplex MCI(2)III(2)IV(2)). Found in a complex with TMEM177, COA6, COX18, COX20, SCO1 and SCO2. Interacts with TMEM177 in a COX20-dependent manner. Interacts with COX20. Interacts with COX16. Requires Cu cation as cofactor.

It is found in the mitochondrion inner membrane. It carries out the reaction 4 Fe(II)-[cytochrome c] + O2 + 8 H(+)(in) = 4 Fe(III)-[cytochrome c] + 2 H2O + 4 H(+)(out). In terms of biological role, component of the cytochrome c oxidase, the last enzyme in the mitochondrial electron transport chain which drives oxidative phosphorylation. The respiratory chain contains 3 multisubunit complexes succinate dehydrogenase (complex II, CII), ubiquinol-cytochrome c oxidoreductase (cytochrome b-c1 complex, complex III, CIII) and cytochrome c oxidase (complex IV, CIV), that cooperate to transfer electrons derived from NADH and succinate to molecular oxygen, creating an electrochemical gradient over the inner membrane that drives transmembrane transport and the ATP synthase. Cytochrome c oxidase is the component of the respiratory chain that catalyzes the reduction of oxygen to water. Electrons originating from reduced cytochrome c in the intermembrane space (IMS) are transferred via the dinuclear copper A center (CU(A)) of subunit 2 and heme A of subunit 1 to the active site in subunit 1, a binuclear center (BNC) formed by heme A3 and copper B (CU(B)). The BNC reduces molecular oxygen to 2 water molecules using 4 electrons from cytochrome c in the IMS and 4 protons from the mitochondrial matrix. The sequence is that of Cytochrome c oxidase subunit 2 (MT-CO2) from Tamias townsendii (Townsend's chipmunk).